Consider the following 437-residue polypeptide: MNPLSIAQDELKAIQSSQPIVWLNRNYQNPASAPATPNVDALYAAEARLKRFAPLLQRLFPELEPSHGLIESSLIQADRLNNRINPVGGLLFLKADHDLPVAGSVKARGGIHEVLCFAESLALTHGVLKDVDSDYCTLASQSARDLFSKHTITVGSTGNLGLSIGVIGSALGFKTVVHMSSDAKEWKMERLRKRGVRVVEHDADYGAALEAGRLETIADPCGYFVDDERSPNLFMGYAVAAKRLQAQLEALNIKVDADHPLFVYLPAGVGGAPGGITYGLKHIFNDHVHCFFAEPVQSPCMLLGMAGAPGAAPTSIYELDLKNRTDADGLAVGAASQWVCDATRNLLSGVYTATDEQLYQQLYLLKDLENIEVEPSAAIGCLGPAMLTSEAGQKYLDSHRLSHRMENSVHIPWLTGGSFVPDEEYQRYLAKAVNVST.

N6-(pyridoxal phosphate)lysine is present on Lys106.

Belongs to the serine/threonine dehydratase family. DsdA subfamily. Requires pyridoxal 5'-phosphate as cofactor.

It carries out the reaction D-serine = pyruvate + NH4(+). The sequence is that of Probable D-serine dehydratase from Hahella chejuensis (strain KCTC 2396).